The following is a 466-amino-acid chain: MPHSYDYDAIVIGSGPGGEGAAMGLVKQGARVAVIERYQNVGGGCTHWGTIPSKALRHAVSRIIEFNQNPLYSDHSRLLRSSFADILNHADNVINQQTRMRQGFYERNHCEILQGNARFVDEHTLALDCPDGSVETLTAEKFVIACGSRPYHPTDVDFTHPRIYDSDSILSMHHEPRHVLIYGAGVIGCEYASIFRGMDVKVDLINTRDRLLAFLDQEMSDSLSYHFWNSGVVIRHNEEYEKIEGCDDGVIMHLKSGKKLKADCLLYANGRTGNTDSLALQNIGLETDSRGQLKVNSMYQTAQPHVYAVGDVIGYPSLASAAYDQGRIAAQALVKGEANAHLIEDIPTGIYTIPEISSVGKTEQQLTAMKVPYEVGRAQFKHLARAQIVGMNVGTLKILFHRETKEILGIHCFGERAAEIIHIGQAIMEQKGGGNTIEYFVNTTFNYPTMAEAYRVAALNGLNRLF.

36–45 (ERYQNVGGGC) is a binding site for FAD.

Belongs to the class-I pyridine nucleotide-disulfide oxidoreductase family. As to quaternary structure, homooligomer; probable homooctamer. FAD is required as a cofactor.

It localises to the cytoplasm. It catalyses the reaction NAD(+) + NADPH = NADH + NADP(+). Functionally, conversion of NADPH, generated by peripheral catabolic pathways, to NADH, which can enter the respiratory chain for energy generation. The protein is Soluble pyridine nucleotide transhydrogenase of Escherichia coli O6:H1 (strain CFT073 / ATCC 700928 / UPEC).